We begin with the raw amino-acid sequence, 399 residues long: Yellow-related salivary protein LJM11 (399 aa).

The N-terminal stretch at 1-18 is a signal peptide; it reads MKVFFSIFTLVLFQGTLG. Residues cysteine 115 and cysteine 186 are joined by a disulfide bond. Asparagine 213 is a glycosylation site (N-linked (GlcNAc...) asparagine). A disulfide bridge links cysteine 319 with cysteine 395. 3 residues coordinate serotonin: threonine 345, asparagine 360, and phenylalanine 362.

The protein belongs to the major royal jelly protein family. Salivary gland (at protein level).

It localises to the secreted. In terms of biological role, probably modulates blood feeding of sand flies on vertebrate species by binding and sequestering different mediators involved in the host response. Binds biogenic amines. Binds serotonin with high affinity. Binds adrenaline and noradrenaline. Binds dopamine and octopamine. Poorly binds histamine. Induces a delayed type hypersensitivity response in host tissues. Induces systemic Th1 immune response in the host. Immunogenic; elicits antibody production in the host. Functions as a chemoattractant for host neutrophils; likely acts through a G-protein-coupled receptor and effect is dependent on calcium influx. Functionally, (Microbial infection) Modulates infection caused by Leishmania species in the host. This chain is Yellow-related salivary protein LJM11, found in Lutzomyia longipalpis (Sand fly).